Here is a 278-residue protein sequence, read N- to C-terminus: Transmembrane protein 45B (278 aa).

Transmembrane regions (helical) follow at residues 7-27 (HALP…KYPL), 49-69 (IIEG…EQFV), 95-115 (YLFF…FHIV), 117-137 (LGLD…LFYF), 149-169 (IHSL…LEVI), 183-203 (LLIL…PPFG), and 215-235 (IMFI…IVAI). A phosphoserine mark is found at Ser273 and Ser275.

The protein belongs to the TMEM45 family.

It localises to the endosome membrane. The protein resides in the lysosome membrane. The protein localises to the golgi apparatus. Its subcellular location is the trans-Golgi network membrane. Its function is as follows. Plays a role in innate immunity. This is Transmembrane protein 45B (Tmem45b) from Mus musculus (Mouse).